Here is a 447-residue protein sequence, read N- to C-terminus: N-succinylarginine dihydrolase (447 aa).

Residues 19–28 (AGLSFGNEAS), N110, and 137–138 (HR) contribute to the substrate site. Residue E174 is part of the active site. R212 serves as a coordination point for substrate. H248 is a catalytic residue. Residues D250 and N359 each contribute to the substrate site. Residue C365 is the Nucleophile of the active site.

The protein belongs to the succinylarginine dihydrolase family. In terms of assembly, homodimer.

It carries out the reaction N(2)-succinyl-L-arginine + 2 H2O + 2 H(+) = N(2)-succinyl-L-ornithine + 2 NH4(+) + CO2. It functions in the pathway amino-acid degradation; L-arginine degradation via AST pathway; L-glutamate and succinate from L-arginine: step 2/5. Functionally, catalyzes the hydrolysis of N(2)-succinylarginine into N(2)-succinylornithine, ammonia and CO(2). This chain is N-succinylarginine dihydrolase, found in Escherichia coli (strain ATCC 8739 / DSM 1576 / NBRC 3972 / NCIMB 8545 / WDCM 00012 / Crooks).